Here is a 423-residue protein sequence, read N- to C-terminus: Gamma-glutamyl phosphate reductase (423 aa).

The protein belongs to the gamma-glutamyl phosphate reductase family.

It is found in the cytoplasm. The catalysed reaction is L-glutamate 5-semialdehyde + phosphate + NADP(+) = L-glutamyl 5-phosphate + NADPH + H(+). Its pathway is amino-acid biosynthesis; L-proline biosynthesis; L-glutamate 5-semialdehyde from L-glutamate: step 2/2. Its function is as follows. Catalyzes the NADPH-dependent reduction of L-glutamate 5-phosphate into L-glutamate 5-semialdehyde and phosphate. The product spontaneously undergoes cyclization to form 1-pyrroline-5-carboxylate. The protein is Gamma-glutamyl phosphate reductase of Magnetococcus marinus (strain ATCC BAA-1437 / JCM 17883 / MC-1).